The sequence spans 249 residues: ATP synthase subunit a (249 aa).

Transmembrane regions (helical) follow at residues 33–53, 83–103, 113–133, 139–159, 188–208, and 216–236; these read YMLI…AQLV, FFPL…IGII, LIVT…YGVA, FFSI…VMFI, VFAG…WVGG, and VALY…FAIL.

It belongs to the ATPase A chain family. F-type ATPases have 2 components, CF(1) - the catalytic core - and CF(0) - the membrane proton channel. CF(1) has five subunits: alpha(3), beta(3), gamma(1), delta(1), epsilon(1). CF(0) has three main subunits: a(1), b(2) and c(9-12). The alpha and beta chains form an alternating ring which encloses part of the gamma chain. CF(1) is attached to CF(0) by a central stalk formed by the gamma and epsilon chains, while a peripheral stalk is formed by the delta and b chains.

Its subcellular location is the cell inner membrane. Key component of the proton channel; it plays a direct role in the translocation of protons across the membrane. In Bradyrhizobium diazoefficiens (strain JCM 10833 / BCRC 13528 / IAM 13628 / NBRC 14792 / USDA 110), this protein is ATP synthase subunit a.